Consider the following 313-residue polypeptide: D-alanine--D-alanine ligase (313 aa).

The region spanning 111–306 (KQVWHSLGLP…FQQLVLAILA (196 aa)) is the ATP-grasp domain. 137–192 (AAELGFPLIVKPAHEGSSIGMAKVESVEALIAAWQDAARYDSQVLVEQWIAGPEYT) provides a ligand contact to ATP. Residues aspartate 260, glutamate 273, and asparagine 275 each contribute to the Mg(2+) site.

It belongs to the D-alanine--D-alanine ligase family. The cofactor is Mg(2+). Requires Mn(2+) as cofactor.

The protein resides in the cytoplasm. The catalysed reaction is 2 D-alanine + ATP = D-alanyl-D-alanine + ADP + phosphate + H(+). It functions in the pathway cell wall biogenesis; peptidoglycan biosynthesis. Cell wall formation. This is D-alanine--D-alanine ligase from Ectopseudomonas mendocina (strain ymp) (Pseudomonas mendocina).